A 338-amino-acid polypeptide reads, in one-letter code: uncharacterized protein (338 aa).

One can recognise a Radical SAM core domain in the interval 111–334 (HLGEERVLVP…LELAEKYNLD (224 aa)). [4Fe-4S] cluster is bound by residues C129, C133, and C136.

It depends on [4Fe-4S] cluster as a cofactor.

This is an uncharacterized protein from Methanocaldococcus jannaschii (strain ATCC 43067 / DSM 2661 / JAL-1 / JCM 10045 / NBRC 100440) (Methanococcus jannaschii).